Reading from the N-terminus, the 262-residue chain is Methylthioribulose-1-phosphate dehydratase (262 aa).

C115 contributes to the substrate binding site. Zn(2+)-binding residues include H133 and H135. Residue E158 is the Proton donor/acceptor of the active site. Position 223 (H223) interacts with Zn(2+).

The protein belongs to the aldolase class II family. MtnB subfamily. Requires Zn(2+) as cofactor.

Its subcellular location is the cytoplasm. It carries out the reaction 5-(methylsulfanyl)-D-ribulose 1-phosphate = 5-methylsulfanyl-2,3-dioxopentyl phosphate + H2O. Its pathway is amino-acid biosynthesis; L-methionine biosynthesis via salvage pathway; L-methionine from S-methyl-5-thio-alpha-D-ribose 1-phosphate: step 2/6. Its function is as follows. Catalyzes the dehydration of methylthioribulose-1-phosphate (MTRu-1-P) into 2,3-diketo-5-methylthiopentyl-1-phosphate (DK-MTP-1-P). This is Methylthioribulose-1-phosphate dehydratase from Meyerozyma guilliermondii (strain ATCC 6260 / CBS 566 / DSM 6381 / JCM 1539 / NBRC 10279 / NRRL Y-324) (Yeast).